Reading from the N-terminus, the 147-residue chain is Deoxyuridine 5'-triphosphate nucleotidohydrolase (147 aa).

Substrate contacts are provided by residues 68 to 70 (RSG), N81, and 85 to 87 (TID).

This sequence belongs to the dUTPase family. Mg(2+) serves as cofactor.

The catalysed reaction is dUTP + H2O = dUMP + diphosphate + H(+). The protein operates within pyrimidine metabolism; dUMP biosynthesis; dUMP from dCTP (dUTP route): step 2/2. Its function is as follows. This enzyme is involved in nucleotide metabolism: it produces dUMP, the immediate precursor of thymidine nucleotides and it decreases the intracellular concentration of dUTP so that uracil cannot be incorporated into DNA. This chain is Deoxyuridine 5'-triphosphate nucleotidohydrolase, found in Solibacter usitatus (strain Ellin6076).